The sequence spans 103 residues: Large ribosomal subunit protein bL21 (103 aa).

This sequence belongs to the bacterial ribosomal protein bL21 family. Part of the 50S ribosomal subunit. Contacts protein L20.

This protein binds to 23S rRNA in the presence of protein L20. In Desulfitobacterium hafniense (strain DSM 10664 / DCB-2), this protein is Large ribosomal subunit protein bL21.